The chain runs to 408 residues: Peptidase T (408 aa).

His-78 provides a ligand contact to Zn(2+). Asp-80 is an active-site residue. A Zn(2+)-binding site is contributed by Asp-140. The active-site Proton acceptor is Glu-173. Zn(2+) contacts are provided by Glu-174, Asp-196, and His-379.

Belongs to the peptidase M20B family. Requires Zn(2+) as cofactor.

It is found in the cytoplasm. It carries out the reaction Release of the N-terminal residue from a tripeptide.. In terms of biological role, cleaves the N-terminal amino acid of tripeptides. The polypeptide is Peptidase T (Escherichia coli O6:K15:H31 (strain 536 / UPEC)).